The sequence spans 240 residues: Uridylate kinase (240 aa).

Residue 12 to 15 (KLSG) coordinates ATP. UMP is bound at residue Gly54. Residues Gly55 and Arg59 each coordinate ATP. UMP is bound by residues Asp74 and 135–142 (TGNPFFTT). Thr162, Tyr168, and Asp171 together coordinate ATP.

It belongs to the UMP kinase family. Homohexamer.

It is found in the cytoplasm. It catalyses the reaction UMP + ATP = UDP + ADP. Its pathway is pyrimidine metabolism; CTP biosynthesis via de novo pathway; UDP from UMP (UMPK route): step 1/1. Its activity is regulated as follows. Inhibited by UTP. In terms of biological role, catalyzes the reversible phosphorylation of UMP to UDP. The sequence is that of Uridylate kinase from Xanthomonas oryzae pv. oryzae (strain KACC10331 / KXO85).